Here is a 304-residue protein sequence, read N- to C-terminus: MGQCVTKCKNPSSTLGSKNGDREPSNKSHSRRGAGHREEQVPPCGKPGGDILVNGTKKAEAATEACQLPTSSGDAGRESKSNAEESSLQRLEELFRRYKDEREDAILEEGMERFCNDLCVDPTEFRVLLLAWKFQAATMCKFTRKEFFDGCKAISADSIDGICARFPSLLTEAKQEDKFKDLYRFTFQFGLDSEEGQRSLHREIAIALWKLVFTQNNPPVLDQWLNFLTENPSGIKGISRDTWNMFLNFTQVIGPDLSNYSEDEAWPSLFDTFVEWEMERRKREGEGRGALSSGPEGLCPEEQT.

2 disordered regions span residues 1 to 86 and 284 to 304; these read MGQC…AEES and EGEG…EEQT. Gly-2 carries the N-myristoyl glycine lipid modification. The DCUN1 domain maps to 86–278; the sequence is SSLQRLEELF…LFDTFVEWEM (193 aa).

Part of a complex containing DCUN1D3, CUL3 and RBX1. Interacts (via the DCUN1 domain) with the unneddylated cullins: interacts with CUL1, CUL2, CUL3, CUL4A, CUL4B and CUL5; these interactions promote the cullin neddylation and the identity of the cullin dictates the affinity of the interaction. Interacts preferentially with CUL3; this interaction triggers the relocalization of CUL3 to the cell membrane where CUL3 is neddylated. Interacts (via DCUN1 domain) with RBX1. May also interact with regulators or subunits of cullin-RING ligases such as RNF7, ELOB and DDB1; these interactions are bridged by cullins. Interacts (via DCUN1 domain) with CAND1; this interaction is bridged by cullins and strongly inhibits cullin neddylation. These CAND-cullin-DCNL complexes can only be neddylated in the presence of a substrate adapter. Interacts (via DCUN1 domain) with the N-terminally acetylated form of UBE2M and UBE2F. Tends to be down-regulated in different type of cancers, including lung neuroendocrine carcinoma, thyroid Huerthle cell carcinoma and lung squamous cell carcinoma. Mostly expressed in testis and brain. Highly expressed in liver, bladder and renal normal tissue than their tumor tissue counterparts. Palmitoylation stabilizes DCUN1D3 at the cell membrane.

Its subcellular location is the cell membrane. It is found in the cytoplasm. The protein resides in the nucleus. The protein localises to the perinuclear region. Contributes to the neddylation of all cullins by transferring NEDD8 from N-terminally acetylated NEDD8-conjugating E2s enzyme to different cullin C-terminal domain-RBX complexes and may play a role in the cell cycle progression by regulating the SCF ubiquitin E3 ligase complex, after UV damage. At the cell membrane, can promote and as well inhibit cullins neddylation. The sequence is that of DCN1-like protein 3 from Homo sapiens (Human).